The following is a 214-amino-acid chain: Reticulon-3-B (214 aa).

A disordered region spans residues Met1–Ser22. A Reticulon domain is found at Val26 to Glu214. A run of 2 helical transmembrane segments spans residues Met46–Leu66 and Thr150–Phe170.

As to quaternary structure, homodimer.

The protein resides in the endoplasmic reticulum membrane. It localises to the golgi apparatus membrane. May be involved in membrane trafficking in the early secretory pathway. The sequence is that of Reticulon-3-B (rtn3-b) from Xenopus laevis (African clawed frog).